Reading from the N-terminus, the 154-residue chain is Aspartate carbamoyltransferase regulatory chain (154 aa).

Residues cysteine 109, cysteine 114, cysteine 138, and cysteine 141 each coordinate Zn(2+).

This sequence belongs to the PyrI family. Contains catalytic and regulatory chains. Zn(2+) is required as a cofactor.

Involved in allosteric regulation of aspartate carbamoyltransferase. The protein is Aspartate carbamoyltransferase regulatory chain of Serratia proteamaculans (strain 568).